Here is a 481-residue protein sequence, read N- to C-terminus: Proline--tRNA ligase (481 aa).

This sequence belongs to the class-II aminoacyl-tRNA synthetase family. ProS type 3 subfamily. In terms of assembly, homodimer.

It localises to the cytoplasm. The catalysed reaction is tRNA(Pro) + L-proline + ATP = L-prolyl-tRNA(Pro) + AMP + diphosphate. Its function is as follows. Catalyzes the attachment of proline to tRNA(Pro) in a two-step reaction: proline is first activated by ATP to form Pro-AMP and then transferred to the acceptor end of tRNA(Pro). The protein is Proline--tRNA ligase of Saccharolobus islandicus (strain Y.N.15.51 / Yellowstone #2) (Sulfolobus islandicus).